A 301-amino-acid chain; its full sequence is Protein FdhE homolog (301 aa).

It belongs to the FdhE family.

The protein resides in the cytoplasm. Functionally, necessary for formate dehydrogenase activity. The chain is Protein FdhE homolog from Erwinia tasmaniensis (strain DSM 17950 / CFBP 7177 / CIP 109463 / NCPPB 4357 / Et1/99).